Reading from the N-terminus, the 176-residue chain is Probable DNA-directed RNA polymerase subunit delta (176 aa).

The HTH HARE-type domain maps to 14–81; that stretch reads KSFIDMAYTL…GENLWGLRDW (68 aa). Residues 114–176 form a disordered region; it reads LGEDEMDDDD…VFEDEEDFND (63 aa). Acidic residues-rich tracts occupy residues 116–145 and 153–176; these read EDEMDDDDDIPAQTDDQEELNDPEDEQVEE and VIEEDEDELDEDEEVFEDEEDFND.

This sequence belongs to the RpoE family. RNAP is composed of a core of 2 alpha, a beta and a beta' subunits. The core is associated with a delta subunit and one of several sigma factors.

Functionally, participates in both the initiation and recycling phases of transcription. In the presence of the delta subunit, RNAP displays an increased specificity of transcription, a decreased affinity for nucleic acids, and an increased efficiency of RNA synthesis because of enhanced recycling. The chain is Probable DNA-directed RNA polymerase subunit delta from Staphylococcus aureus (strain JH1).